We begin with the raw amino-acid sequence, 216 residues long: MFMARQVLRNGLFLRSLAPIKITARTVASANAGIKRKSRFDKTMIKPLLLVMIFGSILNAVIAEKRNIIDMERKYKLKLDKLKELIRRVHDNNGKVDFDADDELKLVNLRLGIVGKNATGMKEDETDIVVPKEESLEEIWQSIIDEAKKEVIEKTPDAGVKNKEGIVTDLNVLKDLEKSKKEDEKVYLSGDVHMMMNQPGDLNEIAKEHDKIPKFL.

The transit peptide at 1 to 26 (MFMARQVLRNGLFLRSLAPIKITART) directs the protein to the mitochondrion. The Mitochondrial matrix portion of the chain corresponds to 27–43 (VASANAGIKRKSRFDKT). Residues 44-63 (MIKPLLLVMIFGSILNAVIA) traverse the membrane as a helical segment. Positions 64 to 93 (EKRNIIDMERKYKLKLDKLKELIRRVHDNN) form a coiled coil. At 64-216 (EKRNIIDMER…KEHDKIPKFL (153 aa)) the chain is on the mitochondrial intermembrane side.

Component of the inner membrane assembly (INA) complex, composed of INA17 and INA22. Interacts with a subset of F(1)F(0)-ATP synthase subunits of the F(1)-domain and the peripheral stalk.

It localises to the mitochondrion inner membrane. In terms of biological role, component of the INA complex (INAC) that promotes the biogenesis of mitochondrial F(1)F(0)-ATP synthase. INAC facilitates the assembly of the peripheral stalk and promotes the assembly of the catalytic F(1)-domain with the membrane-embedded F(0)-domain. This is Inner membrane assembly complex subunit 22 from Saccharomyces cerevisiae (strain ATCC 204508 / S288c) (Baker's yeast).